Consider the following 237-residue polypeptide: Ribosomal RNA large subunit methyltransferase E (237 aa).

The S-adenosyl-L-methionine site is built by Gly-80, Trp-82, Asp-108, Asp-124, and Asp-148. The active-site Proton acceptor is the Lys-188.

It belongs to the class I-like SAM-binding methyltransferase superfamily. RNA methyltransferase RlmE family.

It localises to the cytoplasm. The enzyme catalyses uridine(2552) in 23S rRNA + S-adenosyl-L-methionine = 2'-O-methyluridine(2552) in 23S rRNA + S-adenosyl-L-homocysteine + H(+). Functionally, specifically methylates the uridine in position 2552 of 23S rRNA at the 2'-O position of the ribose in the fully assembled 50S ribosomal subunit. The sequence is that of Ribosomal RNA large subunit methyltransferase E from Jannaschia sp. (strain CCS1).